The chain runs to 549 residues: Glucose-6-phosphate isomerase (549 aa).

The active-site Proton donor is the E355. Residues H386 and K514 contribute to the active site.

It belongs to the GPI family.

Its subcellular location is the cytoplasm. The catalysed reaction is alpha-D-glucose 6-phosphate = beta-D-fructose 6-phosphate. Its pathway is carbohydrate biosynthesis; gluconeogenesis. It functions in the pathway carbohydrate degradation; glycolysis; D-glyceraldehyde 3-phosphate and glycerone phosphate from D-glucose: step 2/4. Its function is as follows. Catalyzes the reversible isomerization of glucose-6-phosphate to fructose-6-phosphate. The chain is Glucose-6-phosphate isomerase from Buchnera aphidicola subsp. Acyrthosiphon pisum (strain APS) (Acyrthosiphon pisum symbiotic bacterium).